A 1527-amino-acid polypeptide reads, in one-letter code: MADSGASVPSPDLPDLDSLHASLSLPDIPSVAATSLSTSLPAISAKVSGFPSFSSHLPPPPLLSPPTPTTMVGWIGWVFSLVFQTIPSVLYWVITFSTITLPTWLFTLFSMSLTFTMNFTTLLLIVLGLVSTVSWFIRYRFLNMYSRLPPEPQRKEPQLDLFPDVQEGDSKPGLANYLDEFLSAIKVFGYLERPVFHELTRTMQTRKLIAGETLQLEEEKGFCLVVDGLVQIFVKSMRSGKHGLNGEVIEGSSDEDDQARDGKQGYQLLTEVKNGASMSSLFSILSLFTEDIRLRASEGSSSSMSSVQPSPARTTPAPFLDSPGEMLNGSPMVLPRDSEVDSSAINGEAEPLPPVPPLHLGESRASSYHPNGQSTASERVRGNRRKSVHPDIVARAMVDTTIAIIPASAFRRLTRLYPRATAHIVQVILTRLQRVTFATAHSYLGLTNEVLGIEKQMTKFTTYDLPNDIRGAALDRLKDKFLKEKDRLGSEEVTRGIALHNPYAGRRRRSMSFVRKEAALKAKMPLPKRPNSLINPERPFHGYDTAGVSPGDLLSTIQLSRFGPRHDQFATTPRLHSPLTEKERSPLRRSSLQRKDSVDEDALFRESILDCIMKGIGLTPSSHNALRKGSHSGELSPKLVSYDSRRQKAVFSNNAFGFIDAYEGSGDGDTESMMSMSVTSAGGTSPIVYLREDLLNDIEIVYFPKGAVLVEQGERHPGLYYVIDGFLDVGVQVNEKGDDLVGASRPGHAQPDEELFPTLKRTQTATSRGATAAAPINESKRKKPSRKSLYMIKPGGMQGYVGAMASYRSYTDVVAKTDVYVGFLPRASLERLAERYPIALLTLAKRLTGLLPRLLLHIDFALEWVQVNAGQVIYHQGDESDAIYITLNGRLRSVHEGKGGKMTVVGEHGQGESVGELEVMTESTRPATLHAIRDTELAKFPRSLFNSLAQEHTGITIQVSKLIAQRMRDLVENPMTEQGEPGNTGSVKTATSTLNLRTVGILPITTGVPVVEFGNRLLSALQQIGVTDGVTSLNQAAILNHLGRHAFSRMGKLKLSQYLADLEEKYGMVLYIADTNVNSPWTQTCISQADCILLVGLAESSPNVGEYERFLLGMKTTARKELVLLHADRYCPPGLTRKWLKNRVWINGGHHHIQMAFRLTAEPSHPQTKRLGTVLKQRVQILQAEIQKYTSRRIRQTPIYSAQTPFKGDFHRLARRLCGRAVGLVLGGGGARGIAHVGVIKALEEAGIPVDIVGGTSIGAFIGGLYARDADVVPMYGRAKKFAGRMGSIWRFALDLTYPSVSYTTGHEFNRGIFKTFGDSQIEDFWLEFYCNTTNISRSRAEYHSSGYVWRYVRASMSLAGLLPPICDEGSMLLDGGYIDNLTVAHMKTLGADVIFAIDVGSIDDNTPQGYGDSLSGMWSVINRWNPFSSIPNPPTLSEIQARLAYVSSIDNLERAKNIPGCLYMRPPIDRYGTLEFGNFDEIYQVGYAYGKEYLQKLKSQGSLPLPEENEEKKKLQRTLAPRRASI.

The Cytoplasmic segment spans residues 1-73 (MADSGASVPS…SPPTPTTMVG (73 aa)). The helical transmembrane segment at 74–94 (WIGWVFSLVFQTIPSVLYWVI) threads the bilayer. Residues 95–116 (TFSTITLPTWLFTLFSMSLTFT) lie on the Lumenal side of the membrane. Residues 117–137 (MNFTTLLLIVLGLVSTVSWFI) form a helical membrane-spanning segment. Residues 138–1527 (RYRFLNMYSR…RTLAPRRASI (1390 aa)) are Cytoplasmic-facing. The segment covering 299–310 (GSSSSMSSVQPS) has biased composition (low complexity). Disordered regions lie at residues 299–387 (GSSS…RRKS), 567–596 (DQFA…QRKD), and 765–785 (ATSR…KKPS). Positions 364–377 (RASSYHPNGQSTAS) are enriched in polar residues. Residues 682–809 (GGTS…SYRS) and 846–966 (RLTG…IAQR) each bind a nucleoside 3',5'-cyclic phosphate. A PNPLA domain is found at 1224–1388 (LVLGGGGARG…IDNLTVAHMK (165 aa)). Residues 1228 to 1233 (GGGARG) carry the GXGXXG motif. Positions 1255–1259 (GTSIG) match the GXSXG motif. Serine 1257 acts as the Nucleophile in catalysis. The active-site Proton acceptor is aspartate 1375. A DGA/G motif is present at residues 1375 to 1377 (DGG). A disordered region spans residues 1504–1527 (LPLPEENEEKKKLQRTLAPRRASI).

It belongs to the NTE family.

It localises to the endoplasmic reticulum membrane. The enzyme catalyses a 1-acyl-sn-glycero-3-phosphocholine + H2O = sn-glycerol 3-phosphocholine + a fatty acid + H(+). With respect to regulation, inhibited by organophosphorus esters. Functionally, intracellular phospholipase B that catalyzes the double deacylation of phosphatidylcholine (PC) to glycerophosphocholine (GroPCho). Plays an important role in membrane lipid homeostasis. Responsible for the rapid PC turnover in response to inositol, elevated temperatures, or when choline is present in the growth medium. This Emericella nidulans (strain FGSC A4 / ATCC 38163 / CBS 112.46 / NRRL 194 / M139) (Aspergillus nidulans) protein is Lysophospholipase nte1 (nte1).